We begin with the raw amino-acid sequence, 224 residues long: tRNA pseudouridine synthase B (224 aa).

The Nucleophile role is filled by Asp-46.

Belongs to the pseudouridine synthase TruB family. Type 1 subfamily.

It carries out the reaction uridine(55) in tRNA = pseudouridine(55) in tRNA. Its function is as follows. Responsible for synthesis of pseudouridine from uracil-55 in the psi GC loop of transfer RNAs. This chain is tRNA pseudouridine synthase B, found in Methylococcus capsulatus (strain ATCC 33009 / NCIMB 11132 / Bath).